A 584-amino-acid chain; its full sequence is Putative poly(A) polymerase catalytic subunit (584 aa).

Residues 522–531 (EAEISEKEET) show a composition bias toward basic and acidic residues. The interval 522 to 584 (EAEISEKEET…ENSLDSLTSD (63 aa)) is disordered. The span at 546-569 (SPNSSPNSSPNNSLNNSIDISTNN) shows a compositional bias: low complexity.

It belongs to the poxviridae poly(A) polymerase catalytic subunit family. Highly divergent.

The protein resides in the virion. The enzyme catalyses RNA(n) + ATP = RNA(n)-3'-adenine ribonucleotide + diphosphate. Its function is as follows. Polymerase that creates the 3'-poly(A) tail of mRNA's. The sequence is that of Putative poly(A) polymerase catalytic subunit from Acanthamoeba polyphaga (Amoeba).